We begin with the raw amino-acid sequence, 175 residues long: Mitochondrial inner membrane protease subunit 2 (175 aa).

Residues 19–37 (FFVAVPVAVTFLDRVACVA) traverse the membrane as a helical segment. Catalysis depends on residues serine 43 and lysine 91.

This sequence belongs to the peptidase S26 family. IMP2 subfamily. In terms of assembly, heterodimer of 2 subunits, IMMPL1 and IMMPL2. In terms of tissue distribution, expressed in all tissues tested except adult liver and lung.

The protein resides in the mitochondrion inner membrane. Functionally, catalyzes the removal of transit peptides required for the targeting of proteins from the mitochondrial matrix, across the inner membrane, into the inter-membrane space. Known to process the nuclear encoded protein DIABLO. The protein is Mitochondrial inner membrane protease subunit 2 (IMMP2L) of Homo sapiens (Human).